Consider the following 474-residue polypeptide: Receptor-transporting protein 3 (474 aa).

Residues 1-453 (MMEEDIGDTE…SCCEAACNCM (453 aa)) lie on the Cytoplasmic side of the membrane. A 3CxxC-type zinc finger spans residues 53–164 (TFARFHCPSC…SSNCEACLLG (112 aa)). Residues 175–304 (SKPPAPPLSP…ISCTSKPSTT (130 aa)) are disordered. Polar residues-rich tracts occupy residues 197 to 228 (VTCS…NPTK) and 259 to 304 (VTCS…PSTT). Residues 454-474 (SQSPLCCLAFLILFLLLWYLL) traverse the membrane as a helical segment.

This sequence belongs to the TMEM7 family. As to quaternary structure, interacts with TAS2R16. As to expression, expressed predominantly in the liver. Not detected in the olfactory epithelium.

It localises to the membrane. In terms of biological role, promotes functional cell surface expression of the bitter taste receptors TAS2R16 and TAS2R43. The sequence is that of Receptor-transporting protein 3 (Rtp3) from Mus musculus (Mouse).